The primary structure comprises 573 residues: Arylsulfatase I (573 aa).

The signal sequence occupies residues 1-23 (MHALSGFSLVSLLSLGYLSWDWA). Residues Asp-55, Asp-56, and Cys-93 each coordinate Ca(2+). The active-site Nucleophile is the Cys-93. Cys-93 carries the 3-oxoalanine (Cys) modification. Lys-147 is a binding site for substrate. Residue His-149 is part of the active site. His-239 is a binding site for substrate. N-linked (GlcNAc...) asparagine glycans are attached at residues Asn-276 and Asn-288. Asp-297 and Asn-298 together coordinate Ca(2+). Residue Lys-315 coordinates substrate. Residues Asn-466 and Asn-496 are each glycosylated (N-linked (GlcNAc...) asparagine). Residues 506-550 (AANPRAHPDFNGGAWGPWASDEDEEEEDEEEEGRARSFPRGRRKK) are disordered. Residues 525 to 537 (SDEDEEEEDEEEE) are compositionally biased toward acidic residues.

Belongs to the sulfatase family. Ca(2+) serves as cofactor. The oxidation of Cys-93 residue to 3-oxoalanine (also known as C(alpha)-formylglycine) by SUMF1/Sulfatase-modifying factor 1, seems critical for catalytic activity.

It localises to the secreted. The protein resides in the endoplasmic reticulum. In terms of biological role, displays arylsulfatase activity at neutral pH, when co-expressed with SUMF1; arylsulfatase activity is measured in the secretion medium of retinal cell line, but no activity is recorded when measured in cell extracts. The polypeptide is Arylsulfatase I (Arsi) (Rattus norvegicus (Rat)).